The sequence spans 159 residues: Large ribosomal subunit protein uL15 (159 aa).

Positions 1-13 (MRIHEVTPKEGST) are enriched in basic and acidic residues. The interval 1 to 51 (MRIHEVTPKEGSTKRRRRVGRGISAGQGASCGFGMRGQKSRSGTGTKAGFE) is disordered. Gly residues predominate over residues 23 to 35 (ISAGQGASCGFGM).

It belongs to the universal ribosomal protein uL15 family. In terms of assembly, part of the 50S ribosomal subunit.

Functionally, binds to the 23S rRNA. The chain is Large ribosomal subunit protein uL15 from Rippkaea orientalis (strain PCC 8801 / RF-1) (Cyanothece sp. (strain PCC 8801)).